The following is a 572-amino-acid chain: Probable inactive glycosyltransferase 25 family member 3 (572 aa).

Residues Asn52, Asn130, Asn214, and Asn337 are each glycosylated (N-linked (GlcNAc...) asparagine). The short motif at 569-572 (RDEL) is the Prevents secretion from ER element.

Belongs to the glycosyltransferase 25 family.

It is found in the endoplasmic reticulum lumen. Probable cell adhesion protein involved in leukocyte transmigration across the blood-brain barrier. Does not express any beta-galactosyltransferase activity in vitro. The protein is Probable inactive glycosyltransferase 25 family member 3 (Cercam) of Rattus norvegicus (Rat).